A 336-amino-acid polypeptide reads, in one-letter code: MTHKVATDFEDGVTRFIDANTGETVADAAYRQGINLPLDCRDGACGACKCFAESGRYSLGEEYIEDALSEAEAEQGYVLTCQMRAESDCVIRVPAASDVCKTQQAGYQAAISNVRQLSESTIALSIKSASLNQLAFLPGQYVNLQVPGSDQTRAYSFSSLQKDGEVSFLIRKLPGGLMSSFLTSLAKVGDSVSLAGPLGAFYLREIKRPLLLLAGGTGLAPFTAMLEKIAEQGGEHPLHLIYGVTHDHDLVEMDKLEAFAARIPNFSYSACVASPDSAYPQKGYVTQYIEPKQLNGGEVDIYLCGPPPMVEAVSQYIRAQGIQPANFYYEKFAASA.

In terms of domain architecture, 2Fe-2S ferredoxin-type spans 3–97 (HKVATDFEDG…DCVIRVPAAS (95 aa)). C40, C45, C48, and C81 together coordinate [2Fe-2S] cluster. Residues 99 to 336 (VCKTQQAGYQ…FYYEKFAASA (238 aa)) form a ferredoxin-reductase region. The 101-residue stretch at 104 to 204 (QAGYQAAISN…AGPLGAFYLR (101 aa)) folds into the FAD-binding FR-type domain.

The protein belongs to the bacterial ring-hydroxylating dioxygenase ferredoxin reductase family. In terms of assembly, this dioxygenase system consists of three proteins: the two subunits of the hydroxylase component (XylX and XylY), and an electron transfer component (XylZ). The cofactor is FAD. It depends on [2Fe-2S] cluster as a cofactor.

The catalysed reaction is 2 reduced [2Fe-2S]-[ferredoxin] + NAD(+) + H(+) = 2 oxidized [2Fe-2S]-[ferredoxin] + NADH. Its function is as follows. Electron transfer component of toluate 1,2-dioxygenase system. The chain is Toluate 1,2-dioxygenase electron transfer component (xylZ) from Pseudomonas putida (Arthrobacter siderocapsulatus).